Consider the following 225-residue polypeptide: PKHD-type hydroxylase YbiX (225 aa).

Positions 78-177 (TLSTPLFNRY…RVASFMWIQS (100 aa)) constitute a Fe2OG dioxygenase domain. Residues histidine 96, aspartate 98, and histidine 158 each coordinate Fe cation. Arginine 168 is a binding site for 2-oxoglutarate.

Requires Fe(2+) as cofactor. L-ascorbate serves as cofactor.

This is PKHD-type hydroxylase YbiX from Escherichia coli O6:H1 (strain CFT073 / ATCC 700928 / UPEC).